The chain runs to 1529 residues: Ras guanine nucleotide exchange factor B (1529 aa).

A coiled-coil region spans residues 135 to 186; sequence ISNIEKQLSNLVNLKSNTTEQTDRKYKTNLIDFKESIIQLEKDCKNLLKQSN. Disordered regions lie at residues 290 to 357, 576 to 600, 680 to 724, 847 to 948, and 1168 to 1206; these read INTL…ISIN, TTTT…KSSH, KRNT…HIQQ, MGKE…NHNR, and QPPQ…STNL. 3 stretches are compositionally biased toward low complexity: residues 576 to 591, 683 to 724, and 853 to 887; these read TTTT…TTTN, TSSG…HIQQ, and NSNT…NNNE. Coiled-coil stretches lie at residues 722–798 and 871–898; these read IQQI…LNRK and NNNN…ETNK. The segment covering 888–898 has biased composition (basic and acidic residues); it reads NKNENKNETNK. Composition is skewed to low complexity over residues 906–916, 924–940, 1168–1187, and 1197–1206; these read SSTSTLSSSTT, SSTN…LLPP, QPPQ…TTQP, and QPQLQQSTNL. The N-terminal Ras-GEF domain maps to 1075-1205; that stretch reads FYRSIKYASL…PQPQLQQSTN (131 aa). The region spanning 1282-1517 is the Ras-GEF domain; that stretch reads SSTDIAEQLT…YEQSILLEPK (236 aa).

The protein resides in the cytoplasm. Its function is as follows. Promotes the exchange of Ras-bound GDP by GTP. Involved in phagocytosis, fluid-phase endocytosis, regulation of macropinocytosis and control of cell movement. This is Ras guanine nucleotide exchange factor B (gefB) from Dictyostelium discoideum (Social amoeba).